The following is a 491-amino-acid chain: Cobyric acid synthase (491 aa).

The GATase cobBQ-type domain occupies alanine 258–phenylalanine 445. The Nucleophile role is filled by cysteine 340. The active site involves histidine 437.

Belongs to the CobB/CobQ family. CobQ subfamily.

The protein operates within cofactor biosynthesis; adenosylcobalamin biosynthesis. In terms of biological role, catalyzes amidations at positions B, D, E, and G on adenosylcobyrinic A,C-diamide. NH(2) groups are provided by glutamine, and one molecule of ATP is hydrogenolyzed for each amidation. The chain is Cobyric acid synthase from Mesorhizobium japonicum (strain LMG 29417 / CECT 9101 / MAFF 303099) (Mesorhizobium loti (strain MAFF 303099)).